The sequence spans 1091 residues: AP-3 complex subunit beta-1 (1091 aa).

2 disordered regions span residues 1 to 32 (MSGN…SPSG) and 267 to 290 (EDNE…KKKP). Over residues 267-288 (EDNEKNFYESDDEQKEKTDQKK) the composition is skewed to basic and acidic residues. S276 and S609 each carry phosphoserine. The interval 664–807 (AGKAKKENPA…EKEKKTKEDR (144 aa)) is disordered. The segment covering 667-678 (AKKENPARKFYS) has biased composition (basic and acidic residues). 2 stretches are compositionally biased toward acidic residues: residues 679–695 (DSEE…DSES) and 703–718 (EQDE…SEDS). Residues 719–736 (SSEHRSDSESVSEVGDKR) show a composition bias toward basic and acidic residues. A phosphoserine mark is found at S748 and S750. The segment covering 763 to 775 (SDSSSTDSSSVEE) has biased composition (low complexity). A compositionally biased stretch (acidic residues) spans 776 to 789 (SSSDSESESESESE). A compositionally biased stretch (basic and acidic residues) spans 790-807 (SESKKVTMEKEKKTKEDR).

This sequence belongs to the adaptor complexes large subunit family. In terms of assembly, adaptor protein complex 3 (AP-3) is a heterotetramer composed of two large adaptins (delta-type subunit AP3D1 and beta-type subunit AP3B1 or AP3B2), a medium adaptin (mu-type subunit AP3M1 or AP3M2) and a small adaptin (sigma-type subunit APS1 or AP3S2). AP-3 associates with the BLOC-1 complex. Interacts with KIF3A; interaction is direct; interaction is impaired by pyrophosphorylation of AP3B1. In terms of processing, phosphorylated on serine residues. Pyrophosphorylation by 5-diphosphoinositol pentakisphosphate (5-IP7) impairs interaction with KIF3A. Serine pyrophosphorylation is achieved by Mg(2+)-dependent, but enzyme independent transfer of a beta-phosphate from a inositol pyrophosphate to a pre-phosphorylated serine residue.

The protein resides in the cytoplasmic vesicle. Its subcellular location is the clathrin-coated vesicle membrane. It localises to the golgi apparatus. In terms of biological role, subunit of non-clathrin- and clathrin-associated adaptor protein complex 3 (AP-3) that plays a role in protein sorting in the late-Golgi/trans-Golgi network (TGN) and/or endosomes. The AP complexes mediate both the recruitment of clathrin to membranes and the recognition of sorting signals within the cytosolic tails of transmembrane cargo molecules. AP-3 appears to be involved in the sorting of a subset of transmembrane proteins targeted to lysosomes and lysosome-related organelles. In concert with the BLOC-1 complex, AP-3 is required to target cargos into vesicles assembled at cell bodies for delivery into neurites and nerve terminals. In Canis lupus familiaris (Dog), this protein is AP-3 complex subunit beta-1 (AP3B1).